Reading from the N-terminus, the 867-residue chain is Nuclear body protein SP140 (867 aa).

Residues 22–138 (VAEIQNVEGQ…IYRSFQNVCY (117 aa)) form the HSR domain. Disordered stretches follow at residues 260-341 (TYST…EEPQ), 365-432 (TPQV…SEEL), and 486-580 (IANN…KHKD). Positions 268–301 (KQGEEEGRNSPRKRNQDKEKYQESPEGRDKETFD) are enriched in basic and acidic residues. Acidic residues-rich tracts occupy residues 323-341 (EGEE…EEPQ) and 384-397 (EGEE…EMCD). Low complexity predominate over residues 404 to 416 (ASSSLARRGSVSS). 2 stretches are compositionally biased toward basic residues: residues 494–512 (KPKR…RMRM) and 567–577 (QKRVRSRASRK). Residues 495 to 514 (PKRKRRKKRGHGWSRMRMRR) carry the Nuclear localization signal motif. Residues 580-661 (DETVDFKAPL…RWLMENGFLP (82 aa)) form the SAND domain. The segment at 690 to 736 (LDECEVCRDGGELFCCDTCSRVFHEDCHIPPVEAERTPWNCIFCRMK) adopts a PHD-type zinc-finger fold. Thr-726 carries the phosphothreonine modification. In terms of domain architecture, Bromo spans 754–857 (QMCPEEQLKC…AEFEKNFKEV (104 aa)).

In terms of assembly, interacts with PIN1. Post-translationally, phosphorylation at Thr-726 promotes binding of PIN1 and subsequent isomerization of Pro-727. High levels in spleen and peripheral blood leukocytes, much lower levels in tonsils, thymus, prostate, ovary, small intestine, and colon. Very low levels in heart, brain, placenta, lung, liver, skeletal muscle, kidney, and pancreas. Not detected in brain, liver and muscle.

The protein resides in the nucleus. It localises to the PML body. The protein localises to the cytoplasm. Functionally, component of the nuclear body, also known as nuclear domain 10, PML oncogenic domain, and KR body. May be involved in the pathogenesis of acute promyelocytic leukemia and viral infection. May play a role in chromatin-mediated regulation of gene expression although it does not bind to histone H3 tails. The polypeptide is Nuclear body protein SP140 (Homo sapiens (Human)).